A 504-amino-acid polypeptide reads, in one-letter code: MFGDRQRPMVLVLGLGESGLAIARWCARHGCRLRIADTRETPPNLAALTAAGIDAEFVGGAFSPALIDGGIELVALSPGLSPLAEDLAPLVAAARERGIPVWGELEFFAQALTTLGANGYAPKVIAITGTNGKTTTTSLAGLLCERAGKTVAVAGNISPAMLDKLTEAIDAAALPDVWVLELSSFQLDTAHTFAPDAATILNITQDHLDWHGGFAAYAAAKGRIFGPRTVRVLNRDDAEVMKFAPPAAAADAPRAITFGLNEPAADGDYGLLRENGIAWLVEAVDRDAADAPATPSRRRKQEAANPPDIALKRLMPADALRIRGLHNAANALAAYALARAIDLPAAPLLHGLREYRGEPHRVEVIATLDGVDYVDDSKGTNVGATVAALDGLAQRAVLIAGGDGKGQDFEPLAAPVARWCRAVMLIGRDAPALREALADTGVPLADHATLESAVRAAGALAQPGDAVLLSPACASLDMFRNYAHRADVFRSAVEDIALEKGTTL.

129–135 (GTNGKTT) serves as a coordination point for ATP.

This sequence belongs to the MurCDEF family.

It is found in the cytoplasm. It catalyses the reaction UDP-N-acetyl-alpha-D-muramoyl-L-alanine + D-glutamate + ATP = UDP-N-acetyl-alpha-D-muramoyl-L-alanyl-D-glutamate + ADP + phosphate + H(+). It functions in the pathway cell wall biogenesis; peptidoglycan biosynthesis. In terms of biological role, cell wall formation. Catalyzes the addition of glutamate to the nucleotide precursor UDP-N-acetylmuramoyl-L-alanine (UMA). The chain is UDP-N-acetylmuramoylalanine--D-glutamate ligase from Burkholderia thailandensis (strain ATCC 700388 / DSM 13276 / CCUG 48851 / CIP 106301 / E264).